The chain runs to 457 residues: Solute carrier family 38 member 6 (457 aa).

Met1 is modified (N-acetylmethionine). A phosphoserine mark is found at Ser4 and Ser7. Helical transmembrane passes span Phe48–Ala68, Val70–Ala90, Leu112–Gln132, Leu171–Phe191, and Leu192–Ile212. A disulfide bridge connects residues Cys219 and Cys239. The N-linked (GlcNAc...) asparagine glycan is linked to Asn234. Residues Val251 to Tyr271 traverse the membrane as a helical segment. A glycan (N-linked (GlcNAc...) asparagine) is linked at Asn284. The next 5 membrane-spanning stretches (helical) occupy residues Ala289–Tyr309, Ala328–Ile348, Ser372–Ile392, Val395–Phe415, and Ala432–Leu452.

It belongs to the amino acid/polyamine transporter 2 family.

The protein localises to the cell membrane. Its subcellular location is the synapse. The catalysed reaction is L-glutamine(out) = L-glutamine(in). It catalyses the reaction L-glutamate(out) = L-glutamate(in). In terms of biological role, amino acid transporter with an apparent selectivity for L-glutamine and L-glutamate. May facilitate glutamine uptake in excitatory neurons. The transport mechanism remains to be elucidated. This is Solute carrier family 38 member 6 from Rattus norvegicus (Rat).